Consider the following 367-residue polypeptide: Flagellar P-ring protein (367 aa).

The N-terminal stretch at 1 to 18 is a signal peptide; it reads MFRALITALFCFSGLALA.

Belongs to the FlgI family. The basal body constitutes a major portion of the flagellar organelle and consists of four rings (L,P,S, and M) mounted on a central rod.

Its subcellular location is the periplasm. It is found in the bacterial flagellum basal body. Assembles around the rod to form the L-ring and probably protects the motor/basal body from shearing forces during rotation. The polypeptide is Flagellar P-ring protein (Rhizorhabdus wittichii (strain DSM 6014 / CCUG 31198 / JCM 15750 / NBRC 105917 / EY 4224 / RW1) (Sphingomonas wittichii)).